The chain runs to 61 residues: Bowman-Birk type proteinase inhibitor B5 (61 aa).

Disulfide bonds link cysteine 5/cysteine 60, cysteine 6/cysteine 22, cysteine 9/cysteine 56, cysteine 12/cysteine 20, cysteine 29/cysteine 36, and cysteine 33/cysteine 48.

The protein belongs to the Bowman-Birk serine protease inhibitor family. In terms of tissue distribution, expressed in bulb (at protein level).

In terms of biological role, serine protease inhibitor. Inhibits trypsin (Ki = 41 nM) and weakly inhibits chymotrypsin (Ki = 410 nM). Does not inhibit bacterial subtilisin. The sequence is that of Bowman-Birk type proteinase inhibitor B5 from Hyacinthus orientalis (Common hyacinth).